Here is an 84-residue protein sequence, read N- to C-terminus: Small ribosomal subunit protein bS18 (84 aa).

This sequence belongs to the bacterial ribosomal protein bS18 family. Part of the 30S ribosomal subunit. Forms a tight heterodimer with protein bS6.

In terms of biological role, binds as a heterodimer with protein bS6 to the central domain of the 16S rRNA, where it helps stabilize the platform of the 30S subunit. The protein is Small ribosomal subunit protein bS18 of Mycobacterium leprae (strain Br4923).